The chain runs to 219 residues: MATSMIPIFVTFMLVAAHMALADTNMLQDFCVADLSNGLKVNGYPCKDPAKVTPEDFYFIGLATAAATANSSMGSAVTGANVEKVPGLNTLGVSISRIDYAPGGLNPPHLHPRASEAIFVLEGRLFVGFLTTTGKLISKHVNKGDVFVFPKALLHFQQNPNKAPASVLAAFDSQLPGTQVVGPSLFGSNPPIPDDLLAKAFGAAAPEIQKIKGKFPPKK.

Residues 1 to 22 (MATSMIPIFVTFMLVAAHMALA) form the signal peptide. The cysteines at positions 31 and 46 are disulfide-linked. The Cupin type-1 domain occupies 60-209 (IGLATAAATA…AFGAAAPEIQ (150 aa)). The N-linked (GlcNAc...) asparagine glycan is linked to Asn70. Positions 109, 111, 116, and 155 each coordinate Mn(2+).

It belongs to the germin family. In terms of assembly, oligomer (believed to be a pentamer but probably hexamer).

The protein localises to the secreted. It localises to the extracellular space. The protein resides in the apoplast. Its function is as follows. May play a role in plant defense. Probably has no oxalate oxidase activity even if the active site is conserved. This chain is Germin-like protein subfamily 2 member 3 (GLP8), found in Arabidopsis thaliana (Mouse-ear cress).